The following is a 537-amino-acid chain: Multidrug resistance protein Stp (537 aa).

14 consecutive transmembrane segments (helical) span residues 6-26, 46-66, 77-97, 104-124, 136-156, 163-183, 200-220, 223-243, 262-282, 300-320, 327-347, 352-372, 397-417, and 478-498; these read LLTLIATGLGLFMIFLDALIV, WVVASYSLGMAVFIMSAATLA, IGVSLFTLGSIACGLAPSIAV, AQGLGAAAVSVTSLALVSAAF, IWTAIASIGTTTGPTLGGLLV, SIFYVNLPMGALVLFLTLCYV, LLFIVAVGALVYAVIEGPQIG, SVQTIVMLWTAAVGCALFVWL, YALAIATICTVFFAVYGMLLL, LMILPFSAAVAIVSPLVGHLV, VPILAGLCMLMLGLLMLIFSE, ALVLVGLGLCGSGVALCLTPI, AIGSTIGFAVLGSVLAAWLSA, and VALLVATATLAVVFLAGWRWF.

The protein belongs to the major facilitator superfamily. EmrB family.

The protein resides in the cell membrane. This chain is Multidrug resistance protein Stp (stp), found in Mycobacterium tuberculosis (strain CDC 1551 / Oshkosh).